A 151-amino-acid chain; its full sequence is Neuroglobin (151 aa).

Residues 1–149 form the Globin domain; sequence MERPEHELIR…VVQAMSRGWN (149 aa). The heme b site is built by histidine 64 and histidine 96.

This sequence belongs to the globin family. As to quaternary structure, monomer. Homodimer and homotetramer; disulfide-linked. Mainly monomeric but also detected as part of homodimers and homotetramers. Interacts with 14-3-3 proteins; regulates the phosphorylation of NGB. Could interact (ferrous form) with G-alpha(i) proteins (GTP-bound form). In terms of processing, phosphorylated during hypoxia by ERK1/ERK2. Phosphorylation regulates the heme pocket hexacoordination preventing the association of His-64 with the heme metal center. Thereby, promotes the access of dioxygen and nitrite to the heme and stimulates the nitrite reductase activity. Phosphorylation during hypoxia is stabilized by 14-3-3 proteins.

The protein resides in the cytoplasm. It is found in the cytosol. Its subcellular location is the mitochondrion matrix. It catalyses the reaction Fe(III)-heme b-[protein] + nitric oxide + H2O = Fe(II)-heme b-[protein] + nitrite + 2 H(+). Its function is as follows. Monomeric globin with a bis-histidyl six-coordinate heme-iron atom through which it can bind dioxygen, carbon monoxide and nitric oxide. Could help transport oxygen and increase its availability to the metabolically active neuronal tissues, though its low quantity in tissues as well as its high affinity for dioxygen, which may limit its oxygen-releasing ability, argue against it. The ferrous/deoxygenated form exhibits a nitrite reductase activity and it could produce nitric oxide which in turn inhibits cellular respiration in response to hypoxia. In its ferrous/deoxygenated state, it may also exhibit GDI (Guanine nucleotide Dissociation Inhibitor) activity toward heterotrimeric G-alpha proteins, thereby regulating signal transduction to facilitate neuroprotective responses in the wake of hypoxia and associated oxidative stress. In Sus scrofa (Pig), this protein is Neuroglobin.